A 932-amino-acid polypeptide reads, in one-letter code: Isoleucine--tRNA ligase (932 aa).

A 'HIGH' region motif is present at residues 57 to 67; it reads PYANGDIHIGT. Position 559 (glutamate 559) interacts with L-isoleucyl-5'-AMP. Positions 600-604 match the 'KMSKS' region motif; sequence KMSKS. Residue lysine 603 participates in ATP binding. Residues cysteine 899, cysteine 902, cysteine 919, and cysteine 922 each contribute to the Zn(2+) site.

It belongs to the class-I aminoacyl-tRNA synthetase family. IleS type 1 subfamily. As to quaternary structure, monomer. It depends on Zn(2+) as a cofactor.

It localises to the cytoplasm. The enzyme catalyses tRNA(Ile) + L-isoleucine + ATP = L-isoleucyl-tRNA(Ile) + AMP + diphosphate. Catalyzes the attachment of isoleucine to tRNA(Ile). As IleRS can inadvertently accommodate and process structurally similar amino acids such as valine, to avoid such errors it has two additional distinct tRNA(Ile)-dependent editing activities. One activity is designated as 'pretransfer' editing and involves the hydrolysis of activated Val-AMP. The other activity is designated 'posttransfer' editing and involves deacylation of mischarged Val-tRNA(Ile). The chain is Isoleucine--tRNA ligase from Thermoanaerobacter pseudethanolicus (strain ATCC 33223 / 39E) (Clostridium thermohydrosulfuricum).